Reading from the N-terminus, the 473-residue chain is Chromosomal replication initiator protein DnaA (473 aa).

The tract at residues 1–87 (MADGEESISV…LAVTTFAIVV (87 aa)) is domain I, interacts with DnaA modulators. Residues 87–132 (VNPEIQQESLSTVGEPEPTPAPYLDVATFTVAPPAEITAPPRNGDT) are domain II. The interval 133-349 (RLNSKYSFDN…GTLIRVTAFA (217 aa)) is domain III, AAA+ region. Glycine 177, glycine 179, lysine 180, and threonine 181 together coordinate ATP. The tract at residues 350 to 473 (SLNRTPVDMP…LTSRIKQNHR (124 aa)) is domain IV, binds dsDNA.

Belongs to the DnaA family. In terms of assembly, oligomerizes as a right-handed, spiral filament on DNA at oriC.

Its subcellular location is the cytoplasm. Its function is as follows. Plays an essential role in the initiation and regulation of chromosomal replication. ATP-DnaA binds to the origin of replication (oriC) to initiate formation of the DNA replication initiation complex once per cell cycle. Binds the DnaA box (a 9 base pair repeat at the origin) and separates the double-stranded (ds)DNA. Forms a right-handed helical filament on oriC DNA; dsDNA binds to the exterior of the filament while single-stranded (ss)DNA is stabiized in the filament's interior. The ATP-DnaA-oriC complex binds and stabilizes one strand of the AT-rich DNA unwinding element (DUE), permitting loading of DNA polymerase. After initiation quickly degrades to an ADP-DnaA complex that is not apt for DNA replication. Binds acidic phospholipids. This is Chromosomal replication initiator protein DnaA from Leifsonia xyli subsp. xyli (strain CTCB07).